The sequence spans 471 residues: Ribulose bisphosphate carboxylase large chain (471 aa).

Residues Asn115 and Thr165 each contribute to the substrate site. Residue Lys167 is the Proton acceptor of the active site. Residue Lys169 coordinates substrate. Residues Lys193, Asp195, and Glu196 each coordinate Mg(2+). Lys193 carries the N6-carboxylysine modification. His286 (proton acceptor) is an active-site residue. Arg287, His319, and Ser371 together coordinate substrate.

This sequence belongs to the RuBisCO large chain family. Type I subfamily. In terms of assembly, heterohexadecamer of 8 large chains and 8 small chains. It depends on Mg(2+) as a cofactor.

The catalysed reaction is 2 (2R)-3-phosphoglycerate + 2 H(+) = D-ribulose 1,5-bisphosphate + CO2 + H2O. It carries out the reaction D-ribulose 1,5-bisphosphate + O2 = 2-phosphoglycolate + (2R)-3-phosphoglycerate + 2 H(+). Functionally, ruBisCO catalyzes two reactions: the carboxylation of D-ribulose 1,5-bisphosphate, the primary event in carbon dioxide fixation, as well as the oxidative fragmentation of the pentose substrate. Both reactions occur simultaneously and in competition at the same active site. This chain is Ribulose bisphosphate carboxylase large chain, found in Alvinoconcha hessleri symbiotic bacterium.